Consider the following 335-residue polypeptide: MKEILNALYHQKDLNDEEVKKLFTLIIHEKVSPVQLGTILCALKIKGESFKEISVAATTLLEHAPKPFDSGLDLIDNCGTGGDGLKTINVSTIAALIASSMGLSMAKHGSRSVSSHSGSADLLENLGVNIEMNPTQLENCFKQTHFGFLFAPLYHQSFKKSAPLRKELFTKTIFNCLGPLINPLRPKIQLLGVYDRSLCKTMALALKALGVKRAMVVNGGGTDEIVLHDITHACELKNSEILEYDLSAKDFDLPPYDLKELQIENAQESVQACLDILGNKGKDSHTMVVVANVASLLYLSHKAKDLKEGVSMTLEHLKTKAPYTHLQKIIRLSHA.

5-phospho-alpha-D-ribose 1-diphosphate is bound by residues G79, 82-83, T87, 89-92, 107-115, and S119; these read GD, NVST, and KHGSRSVSS. G79 contacts anthranilate. Position 91 (S91) interacts with Mg(2+). Residue R165 coordinates anthranilate. Residues D223 and E224 each contribute to the Mg(2+) site.

The protein belongs to the anthranilate phosphoribosyltransferase family. Homodimer. It depends on Mg(2+) as a cofactor.

It carries out the reaction N-(5-phospho-beta-D-ribosyl)anthranilate + diphosphate = 5-phospho-alpha-D-ribose 1-diphosphate + anthranilate. It participates in amino-acid biosynthesis; L-tryptophan biosynthesis; L-tryptophan from chorismate: step 2/5. Its function is as follows. Catalyzes the transfer of the phosphoribosyl group of 5-phosphorylribose-1-pyrophosphate (PRPP) to anthranilate to yield N-(5'-phosphoribosyl)-anthranilate (PRA). The polypeptide is Anthranilate phosphoribosyltransferase (Helicobacter pylori (strain HPAG1)).